Consider the following 204-residue polypeptide: U1 small nuclear ribonucleoprotein C (204 aa).

The Matrin-type zinc-finger motif lies at 4–36; it reads FFCDYCDVYLTHDSMSVRKAHNSGRNHLRNVVD. Residues 65 to 204 are disordered; sequence ANPMLPQNQP…GAGAPGHEKR (140 aa). 2 stretches are compositionally biased toward pro residues: residues 77 to 154 and 166 to 192; these read GFPP…PGAP and APPPFPGLPGMPPPGQGFPPGGPPGFA.

Belongs to the U1 small nuclear ribonucleoprotein C family. As to quaternary structure, U1 snRNP is composed of the 7 core Sm proteins B/B', D1, D2, D3, E, F and G that assemble in a heptameric protein ring on the Sm site of the small nuclear RNA to form the core snRNP, and at least 3 U1 snRNP-specific proteins U1-70K, U1-A and U1-C. U1-C interacts with U1 snRNA and the 5' splice-site region of the pre-mRNA.

It localises to the nucleus. In terms of biological role, component of the spliceosomal U1 snRNP, which is essential for recognition of the pre-mRNA 5' splice-site and the subsequent assembly of the spliceosome. U1-C is directly involved in initial 5' splice-site recognition for both constitutive and regulated alternative splicing. The interaction with the 5' splice-site seems to precede base-pairing between the pre-mRNA and the U1 snRNA. Stimulates commitment or early (E) complex formation by stabilizing the base pairing of the 5' end of the U1 snRNA and the 5' splice-site region. This Fusarium vanettenii (strain ATCC MYA-4622 / CBS 123669 / FGSC 9596 / NRRL 45880 / 77-13-4) (Fusarium solani subsp. pisi) protein is U1 small nuclear ribonucleoprotein C.